We begin with the raw amino-acid sequence, 308 residues long: PAK4-inhibitor inka1 (308 aa).

The disordered stretch occupies residues 81-105; it reads EEEESASDPSAVSSPSSERSLEFDS. Positions 87–98 are enriched in low complexity; the sequence is SDPSAVSSPSSE. Inka box regions lie at residues 164–201 and 281–308; these read DPED…DLPE and DTDY…IGYI.

Belongs to the INKA family. In terms of assembly, interacts with pak4/pak5.

It localises to the nucleus. The protein localises to the cytoplasm. In terms of biological role, inhibitor of the serine/threonine-protein kinase pak4/pak5. Acts by binding pak4/pak5 in a substrate-like manner, inhibiting the protein kinase activity. Required for the proper migration of neural crest cells during embryonic development, probably by inhibiting pak4/pak5. This Danio rerio (Zebrafish) protein is PAK4-inhibitor inka1.